The following is a 50-amino-acid chain: ADPQHLCGSHLVDALYLVCGDRGFFYNPKGIVEQCCHRPCNIRVLENYCN.

Cystine bridges form between cysteine 7/cysteine 36, cysteine 19/cysteine 49, and cysteine 35/cysteine 40.

The protein belongs to the insulin family. In terms of assembly, heterodimer of a B chain and an A chain linked by two disulfide bonds.

Its subcellular location is the secreted. Its function is as follows. Insulin decreases blood glucose concentration. It increases cell permeability to monosaccharides, amino acids and fatty acids. It accelerates glycolysis, the pentose phosphate cycle, and glycogen synthesis in liver. In Myoxocephalus scorpius (Shorthorn sculpin), this protein is Insulin (ins).